The primary structure comprises 186 residues: Acireductone dioxygenase (186 aa).

Fe(2+) contacts are provided by H103, H105, E109, and H147. The Ni(2+) site is built by H103, H105, E109, and H147.

The protein belongs to the acireductone dioxygenase (ARD) family. Monomer. Fe(2+) serves as cofactor. The cofactor is Ni(2+).

It catalyses the reaction 1,2-dihydroxy-5-(methylsulfanyl)pent-1-en-3-one + O2 = 3-(methylsulfanyl)propanoate + CO + formate + 2 H(+). The enzyme catalyses 1,2-dihydroxy-5-(methylsulfanyl)pent-1-en-3-one + O2 = 4-methylsulfanyl-2-oxobutanoate + formate + 2 H(+). The protein operates within amino-acid biosynthesis; L-methionine biosynthesis via salvage pathway; L-methionine from S-methyl-5-thio-alpha-D-ribose 1-phosphate: step 5/6. Catalyzes 2 different reactions between oxygen and the acireductone 1,2-dihydroxy-3-keto-5-methylthiopentene (DHK-MTPene) depending upon the metal bound in the active site. Fe-containing acireductone dioxygenase (Fe-ARD) produces formate and 2-keto-4-methylthiobutyrate (KMTB), the alpha-ketoacid precursor of methionine in the methionine recycle pathway. Ni-containing acireductone dioxygenase (Ni-ARD) produces methylthiopropionate, carbon monoxide and formate, and does not lie on the methionine recycle pathway. This Parasynechococcus marenigrum (strain WH8102) protein is Acireductone dioxygenase.